A 321-amino-acid chain; its full sequence is Putative membrane-bound redox modulator Alx (321 aa).

Topologically, residues 1-6 are periplasmic; it reads MNTVGT. The helical transmembrane segment at 7–27 threads the bilayer; that stretch reads PLLWGGFAVVVAIMLAIDLLL. Over 28-43 the chain is Cytoplasmic; that stretch reads QGRRGAHAMTMKQAAA. The chain crosses the membrane as a helical span at residues 44–64; it reads WSLVWVTLSLLFNAAFWWYLV. The Periplasmic segment spans residues 65–89; that stretch reads QTEGRAVADPQALAFLTGYLIEKSL. A helical membrane pass occupies residues 90-110; sequence AVDNVFVWLMLFSYFSVPAAL. Over 111-113 the chain is Cytoplasmic; the sequence is QRR. Residues 114-134 form a helical membrane-spanning segment; sequence VLVYGVLGAIVLRTIMIFTGS. Trp-135 is a topological domain (periplasmic). A helical membrane pass occupies residues 136–156; the sequence is LISQFDWILYIFGAFLLFTGV. Residues 157–198 lie on the Cytoplasmic side of the membrane; sequence KMALAHEDESGIGDKPLVRWLRGHLRMTDTIDNEHFFVRKNG. The chain crosses the membrane as a helical span at residues 199–219; the sequence is LLYATPLMLVLILVELSDVIF. The Periplasmic segment spans residues 220–225; that stretch reads AVDSIP. The helical transmembrane segment at 226–246 threads the bilayer; sequence AIFAVTTDPFIVLTSNLFAIL. Topologically, residues 247–261 are cytoplasmic; the sequence is GLRAMYFLLAGVAER. Residues 262–282 form a helical membrane-spanning segment; it reads FSMLKYGLAVILVFIGIKMLI. Topologically, residues 283-286 are periplasmic; the sequence is VDFY. A helical transmembrane segment spans residues 287-307; sequence HIPIAVSLGVVFGILVMTFII. Residues 308–321 lie on the Cytoplasmic side of the membrane; sequence NAWVNYRHDKQRVG.

It belongs to the TerC family.

Its subcellular location is the cell inner membrane. Functionally, has been proposed to be a redox modulator. This chain is Putative membrane-bound redox modulator Alx (alx), found in Escherichia coli O157:H7.